Here is a 354-residue protein sequence, read N- to C-terminus: S-adenosylmethionine:tRNA ribosyltransferase-isomerase (354 aa).

It belongs to the QueA family. As to quaternary structure, monomer.

The protein resides in the cytoplasm. The catalysed reaction is 7-aminomethyl-7-carbaguanosine(34) in tRNA + S-adenosyl-L-methionine = epoxyqueuosine(34) in tRNA + adenine + L-methionine + 2 H(+). Its pathway is tRNA modification; tRNA-queuosine biosynthesis. Transfers and isomerizes the ribose moiety from AdoMet to the 7-aminomethyl group of 7-deazaguanine (preQ1-tRNA) to give epoxyqueuosine (oQ-tRNA). This chain is S-adenosylmethionine:tRNA ribosyltransferase-isomerase, found in Salmonella paratyphi A (strain ATCC 9150 / SARB42).